We begin with the raw amino-acid sequence, 147 residues long: Austinoid biosynthesis clusters protein H (147 aa).

It belongs to the trt14 isomerase family. As to quaternary structure, homodimer.

Its pathway is secondary metabolite biosynthesis; terpenoid biosynthesis. Part of the gene cluster B that mediates the biosynthesis of the fungal meroterpenoid acetoxydehydroaustin. The first step of the pathway is the synthesis of 3,5-dimethylorsellinic acid by the polyketide synthase ausA. 3,5-dimethylorsellinic acid is then prenylated by the polyprenyl transferase ausN. Further epoxidation by the FAD-dependent monooxygenase ausM and cyclization by the probable terpene cyclase ausL lead to the formation of protoaustinoid A. Protoaustinoid A is then oxidized to spiro-lactone preaustinoid A3 by the combined action of the FAD-binding monooxygenases ausB and ausC, and the dioxygenase ausE. Acid-catalyzed keto-rearrangement and ring contraction of the tetraketide portion of preaustinoid A3 by ausJ lead to the formation of preaustinoid A4. The aldo-keto reductase ausK, with the help of ausH, is involved in the next step by transforming preaustinoid A4 into isoaustinone which is in turn hydroxylated by the P450 monooxygenase ausI to form austinolide. The cytochrome P450 monooxygenase ausG then modifies austinolide to austinol. Austinol is further acetylated to austin by the O-acetyltransferase ausP, which spontaneously changes to dehydroaustin. The cytochrome P450 monooxygenase then converts dehydroaustin is into 7-dehydrodehydroaustin. The hydroxylation catalyzed by ausR permits the second O-acetyltransferase ausQ to add an additional acetyl group to the molecule, leading to the formation of acetoxydehydroaustin. Due to genetic rearrangements of the clusters and the subsequent loss of some enzymes, the end product of the Penicillium brasilianum austinoid biosynthesis clusters is acetoxydehydroaustin. The chain is Austinoid biosynthesis clusters protein H from Penicillium brasilianum.